The chain runs to 128 residues: Small ribosomal subunit protein uS11 (128 aa).

The protein belongs to the universal ribosomal protein uS11 family. As to quaternary structure, part of the 30S ribosomal subunit. Interacts with proteins S7 and S18. Binds to IF-3.

Functionally, located on the platform of the 30S subunit, it bridges several disparate RNA helices of the 16S rRNA. Forms part of the Shine-Dalgarno cleft in the 70S ribosome. The sequence is that of Small ribosomal subunit protein uS11 from Chromohalobacter salexigens (strain ATCC BAA-138 / DSM 3043 / CIP 106854 / NCIMB 13768 / 1H11).